A 253-amino-acid polypeptide reads, in one-letter code: Imidazole glycerol phosphate synthase subunit HisF (253 aa).

Catalysis depends on residues Asp-11 and Asp-130.

It belongs to the HisA/HisF family. Heterodimer of HisH and HisF.

Its subcellular location is the cytoplasm. The catalysed reaction is 5-[(5-phospho-1-deoxy-D-ribulos-1-ylimino)methylamino]-1-(5-phospho-beta-D-ribosyl)imidazole-4-carboxamide + L-glutamine = D-erythro-1-(imidazol-4-yl)glycerol 3-phosphate + 5-amino-1-(5-phospho-beta-D-ribosyl)imidazole-4-carboxamide + L-glutamate + H(+). Its pathway is amino-acid biosynthesis; L-histidine biosynthesis; L-histidine from 5-phospho-alpha-D-ribose 1-diphosphate: step 5/9. Functionally, IGPS catalyzes the conversion of PRFAR and glutamine to IGP, AICAR and glutamate. The HisF subunit catalyzes the cyclization activity that produces IGP and AICAR from PRFAR using the ammonia provided by the HisH subunit. The chain is Imidazole glycerol phosphate synthase subunit HisF from Desulfitobacterium hafniense (strain DSM 10664 / DCB-2).